Reading from the N-terminus, the 77-residue chain is Secapin-2 (77 aa).

Positions 1–32 (MKNYSKNATYLITVLLFSFVTMLLIIPSKCEA) are cleaved as a signal peptide. Residues 33–52 (VSNDMQPLEARTADLVQQPR) constitute a propeptide that is removed on maturation. Cysteines 61 and 72 form a disulfide. Pro-77 is modified (proline amide).

This sequence belongs to the secapin family. In terms of tissue distribution, expressed by the venom gland.

It localises to the secreted. Its function is as follows. Serine protease inhibitor which exhibits antifibrinolytic, antielastolytic and antimicrobial activities. Displays antimicrobial activity against bacteria and fungi. Likely functions in the innate immune response to microbial infection and possibly in the venom, as an antifibrinolytic agent. Induces hyperalgesia and edema mediated by leukotrienes when injected into mice. Does not induce hemolytic activity, mast cell degranulation, or chemotactic activity for polymorphonucleated leukocytes (PMNL). The protein is Secapin-2 of Apis mellifera (Honeybee).